A 900-amino-acid polypeptide reads, in one-letter code: Alanine--tRNA ligase (900 aa).

Zn(2+) is bound by residues His604, His608, Cys708, and His712.

The protein belongs to the class-II aminoacyl-tRNA synthetase family. Zn(2+) serves as cofactor.

It is found in the cytoplasm. The catalysed reaction is tRNA(Ala) + L-alanine + ATP = L-alanyl-tRNA(Ala) + AMP + diphosphate. Its function is as follows. Catalyzes the attachment of alanine to tRNA(Ala) in a two-step reaction: alanine is first activated by ATP to form Ala-AMP and then transferred to the acceptor end of tRNA(Ala). Also edits incorrectly charged Ser-tRNA(Ala) and Gly-tRNA(Ala) via its editing domain. The sequence is that of Alanine--tRNA ligase from Saccharolobus islandicus (strain L.S.2.15 / Lassen #1) (Sulfolobus islandicus).